The following is a 372-amino-acid chain: Chaperone protein DnaJ (372 aa).

Residues 5–70 (DFYEVLGVTK…QKRAAYDRYG (66 aa)) enclose the J domain. The CR-type zinc finger occupies 129–207 (GKLASLTLPT…CGGAGRVTRE (79 aa)). Zn(2+)-binding residues include Cys-142, Cys-145, Cys-159, Cys-162, Cys-181, Cys-184, Cys-195, and Cys-198. CXXCXGXG motif repeat units lie at residues 142 to 149 (CEACDGTG), 159 to 166 (CPTCGGQG), 181 to 188 (CPQCHGRG), and 195 to 202 (CQACGGAG).

This sequence belongs to the DnaJ family. In terms of assembly, homodimer. Requires Zn(2+) as cofactor.

It localises to the cytoplasm. Functionally, participates actively in the response to hyperosmotic and heat shock by preventing the aggregation of stress-denatured proteins and by disaggregating proteins, also in an autonomous, DnaK-independent fashion. Unfolded proteins bind initially to DnaJ; upon interaction with the DnaJ-bound protein, DnaK hydrolyzes its bound ATP, resulting in the formation of a stable complex. GrpE releases ADP from DnaK; ATP binding to DnaK triggers the release of the substrate protein, thus completing the reaction cycle. Several rounds of ATP-dependent interactions between DnaJ, DnaK and GrpE are required for fully efficient folding. Also involved, together with DnaK and GrpE, in the DNA replication of plasmids through activation of initiation proteins. The polypeptide is Chaperone protein DnaJ (Beijerinckia indica subsp. indica (strain ATCC 9039 / DSM 1715 / NCIMB 8712)).